Here is an 87-residue protein sequence, read N- to C-terminus: Large ribosomal subunit protein bL31B (87 aa).

Belongs to the bacterial ribosomal protein bL31 family. Type B subfamily. As to quaternary structure, part of the 50S ribosomal subunit.

The sequence is that of Large ribosomal subunit protein bL31B from Halorhodospira halophila (strain DSM 244 / SL1) (Ectothiorhodospira halophila (strain DSM 244 / SL1)).